The chain runs to 449 residues: CBL-interacting protein kinase 31 (449 aa).

The Protein kinase domain occupies 20-275; sequence YELGRTIGEG…ISQILEDPWF (256 aa). Residues 26–34 and K49 contribute to the ATP site; that span reads IGEGTFAKV. The Proton acceptor role is filled by D143. The activation loop stretch occupies residues 161-190; sequence DFGLSALTEQVKADGLLHTTCGTPNYVAPE. The region spanning 313–337 is the NAF domain; it reads DQPTSMNAFELISLNQALNLDNLFE.

This sequence belongs to the protein kinase superfamily. CAMK Ser/Thr protein kinase family. SNF1 subfamily. In terms of assembly, may interact with CBL3. Mn(2+) is required as a cofactor. In terms of processing, autophosphorylated. Highly expressed in leaf blade and leaf sheath, but not in other tissues.

It catalyses the reaction L-seryl-[protein] + ATP = O-phospho-L-seryl-[protein] + ADP + H(+). The enzyme catalyses L-threonyl-[protein] + ATP = O-phospho-L-threonyl-[protein] + ADP + H(+). Its function is as follows. Involved in cold stress tolerance. CIPK serine-threonine protein kinases interact with CBL proteins. Binding of a CBL protein to the regulatory NAF domain of CIPK protein lead to the activation of the kinase in a calcium-dependent manner. The protein is CBL-interacting protein kinase 31 (CIPK31) of Oryza sativa subsp. japonica (Rice).